A 930-amino-acid polypeptide reads, in one-letter code: Inter-alpha-trypsin inhibitor heavy chain H4 (930 aa).

Residues 1 to 28 (MKPPRPVRTCSKVLVLLSLLAIHQTTTA) form the signal peptide. Positions 29–148 (EKNGIDIYSL…KITFELVYEE (120 aa)) constitute a VIT domain. N-linked (GlcNAc...) asparagine glycosylation is found at asparagine 81 and asparagine 207. In terms of domain architecture, VWFA spans 272–432 (PKNVVFVIDK…YAFLEKLALD (161 aa)). The N-linked (GlcNAc...) asparagine; atypical glycan is linked to asparagine 274. N-linked (GlcNAc...) asparagine glycosylation is found at asparagine 517 and asparagine 577. Residues 595 to 618 (KPDDQEQSQVAEKPMEGESRNRNV) are disordered. Residues 658–688 (MNFRPGVLSSRQLGLPGPPDVPDHAAYHPFR) form a proline-rich (PRR) potential bioactive peptide region. Positions 662 to 688 (PGVLSSRQLGLPGPPDVPDHAAYHPFR) are cleaved as a propeptide — potentially active peptide. O-linked (GalNAc...) threonine glycosylation is found at threonine 719, threonine 720, and threonine 722. The segment at 719–725 (TTMTTQT) is O-glycosylated at three sites. A disulfide bridge connects residues cysteine 747 and cysteine 925.

Belongs to the ITIH family. Interacts (via C-terminus) with DNAJC1 (via SANT 2 domain); this interaction protects ITIH4 against cleavage by kallikrein in vitro. Cleaved by plasma kallikrein to yield 100 kDa and 35 kDa fragments, and the resulting 100 kDa fragment is further converted to a 70 kDa fragment. Post-translationally, N- and O-glycosylated. In urine, O-linked glycosylation on threonine residues in the region from Thr-719 to Thr-725 consists of core 1 or possibly core 8 glycans. Mainly Hex(HexNAc)(2), but also some Hex(3)(HexNAc)(3). N-glycosylated but not O-glycosylated in plasma. In terms of tissue distribution, liver specific.

The protein resides in the secreted. Functionally, type II acute-phase protein (APP) involved in inflammatory responses to trauma. May also play a role in liver development or regeneration. This Homo sapiens (Human) protein is Inter-alpha-trypsin inhibitor heavy chain H4 (ITIH4).